The chain runs to 701 residues: A-type ATP synthase subunit I (701 aa).

10 consecutive transmembrane segments (helical) span residues 340 to 360, 363 to 379, 388 to 408, 435 to 455, 468 to 488, 498 to 518, 555 to 575, 583 to 603, 612 to 632, and 649 to 669; these read WEISPIVFLVFTFPILFGLMF, FGNALVLLLFSIWFYRY, IPKLSIILIYSSIVAIITGLL, LYNLWPIPASVSEAIKFLLPF, MIFSVLLGALALFVSSLLGVI, FLFLEKLPLFLLYVVPIFIFM, GIVWWTSFALLYNWAAHAILV, WGSAIAMGFIEGGFEGALLLL, VLVFALSHYYILYAFSYMAYL, and IIILIIGNLLAIGLEGLVVFI.

The protein belongs to the V-ATPase 116 kDa subunit family. In terms of assembly, has multiple subunits with at least A(3), B(3), C, D, E, F, H, I and proteolipid K(x).

Its subcellular location is the cell membrane. Component of the A-type ATP synthase that produces ATP from ADP in the presence of a proton gradient across the membrane. This Saccharolobus solfataricus (strain ATCC 35092 / DSM 1617 / JCM 11322 / P2) (Sulfolobus solfataricus) protein is A-type ATP synthase subunit I.